The sequence spans 434 residues: Glutamate-1-semialdehyde 2,1-aminomutase (434 aa).

Lys267 is subject to N6-(pyridoxal phosphate)lysine.

This sequence belongs to the class-III pyridoxal-phosphate-dependent aminotransferase family. HemL subfamily. Homodimer. It depends on pyridoxal 5'-phosphate as a cofactor.

Its subcellular location is the cytoplasm. It carries out the reaction (S)-4-amino-5-oxopentanoate = 5-aminolevulinate. It participates in porphyrin-containing compound metabolism; protoporphyrin-IX biosynthesis; 5-aminolevulinate from L-glutamyl-tRNA(Glu): step 2/2. Its pathway is porphyrin-containing compound metabolism; chlorophyll biosynthesis. In Roseiflexus castenholzii (strain DSM 13941 / HLO8), this protein is Glutamate-1-semialdehyde 2,1-aminomutase.